We begin with the raw amino-acid sequence, 686 residues long: Polyribonucleotide nucleotidyltransferase (686 aa).

Mg(2+) is bound by residues aspartate 478 and aspartate 484. In terms of domain architecture, KH spans 545-604; sequence PRVEVIQIPTDKIGLLIGPGGKTINALQDEYGVNISVENDGTVYVAGVEGMSVKAAVSAI. Positions 614–684 constitute an S1 motif domain; it reads GDIYVGKVVK…KQNRISLEMV (71 aa).

This sequence belongs to the polyribonucleotide nucleotidyltransferase family. The cofactor is Mg(2+).

Its subcellular location is the cytoplasm. The catalysed reaction is RNA(n+1) + phosphate = RNA(n) + a ribonucleoside 5'-diphosphate. In terms of biological role, involved in mRNA degradation. Catalyzes the phosphorolysis of single-stranded polyribonucleotides processively in the 3'- to 5'-direction. This chain is Polyribonucleotide nucleotidyltransferase, found in Rubrobacter xylanophilus (strain DSM 9941 / JCM 11954 / NBRC 16129 / PRD-1).